A 208-amino-acid polypeptide reads, in one-letter code: Uracil phosphoribosyltransferase (208 aa).

Residues Arg78, Arg103, and 130–138 (DPMLATGGS) each bind 5-phospho-alpha-D-ribose 1-diphosphate. Residues Ile193 and 198–200 (GDA) each bind uracil. Residue Asp199 coordinates 5-phospho-alpha-D-ribose 1-diphosphate.

This sequence belongs to the UPRTase family. Requires Mg(2+) as cofactor.

The enzyme catalyses UMP + diphosphate = 5-phospho-alpha-D-ribose 1-diphosphate + uracil. Its pathway is pyrimidine metabolism; UMP biosynthesis via salvage pathway; UMP from uracil: step 1/1. Allosterically activated by GTP. Its function is as follows. Catalyzes the conversion of uracil and 5-phospho-alpha-D-ribose 1-diphosphate (PRPP) to UMP and diphosphate. This Pectobacterium atrosepticum (strain SCRI 1043 / ATCC BAA-672) (Erwinia carotovora subsp. atroseptica) protein is Uracil phosphoribosyltransferase.